The following is a 407-amino-acid chain: Imidazolonepropionase (407 aa).

2 residues coordinate Fe(3+): histidine 74 and histidine 76. Residues histidine 74 and histidine 76 each contribute to the Zn(2+) site. The 4-imidazolone-5-propanoate site is built by arginine 83, tyrosine 146, and histidine 179. Tyrosine 146 lines the N-formimidoyl-L-glutamate pocket. Histidine 244 serves as a coordination point for Fe(3+). Histidine 244 provides a ligand contact to Zn(2+). Residue glutamine 247 participates in 4-imidazolone-5-propanoate binding. Aspartate 319 contacts Fe(3+). Aspartate 319 is a Zn(2+) binding site. Asparagine 321 and glycine 323 together coordinate N-formimidoyl-L-glutamate. Threonine 324 is a 4-imidazolone-5-propanoate binding site.

The protein belongs to the metallo-dependent hydrolases superfamily. HutI family. Zn(2+) is required as a cofactor. Fe(3+) serves as cofactor.

The protein localises to the cytoplasm. It carries out the reaction 4-imidazolone-5-propanoate + H2O = N-formimidoyl-L-glutamate. It functions in the pathway amino-acid degradation; L-histidine degradation into L-glutamate; N-formimidoyl-L-glutamate from L-histidine: step 3/3. Its function is as follows. Catalyzes the hydrolytic cleavage of the carbon-nitrogen bond in imidazolone-5-propanoate to yield N-formimidoyl-L-glutamate. It is the third step in the universal histidine degradation pathway. This Salmonella schwarzengrund (strain CVM19633) protein is Imidazolonepropionase.